The primary structure comprises 75 residues: UPF0057 membrane protein At2g24040 (75 aa).

A run of 2 helical transmembrane segments spans residues 4-24 (SCEL…GVCL) and 33-53 (FFIC…YAIY).

This sequence belongs to the UPF0057 (PMP3) family.

It is found in the membrane. This Arabidopsis thaliana (Mouse-ear cress) protein is UPF0057 membrane protein At2g24040.